A 134-amino-acid polypeptide reads, in one-letter code: MTGGGKSGGKASGSKNAQSRSSKAGLAFPVGRVHRLLRKGNYAQRVGAGAPVYLAAVLEYLAAEILELAGNAARDNKKTRIIPRHLQLAIRNDEELNKLLGHVTIAQGGVLPNIHQNLLPKKTGKTGKNASQEL.

Gly residues predominate over residues 1–11 (MTGGGKSGGKA). The segment at 1–25 (MTGGGKSGGKASGSKNAQSRSSKAG) is disordered. Residues Lys6 and Lys10 each carry the N6-acetyllysine modification. Gln107 carries the post-translational modification N5-methylglutamine. A Phosphoserine modification is found at Ser131. The short motif at 131-132 (SQ) is the [ST]-Q motif element.

The protein belongs to the histone H2A family. As to quaternary structure, the nucleosome is a histone octamer containing two molecules each of H2A, H2B, H3 and H4 assembled in one H3-H4 heterotetramer and two H2A-H2B heterodimers. The octamer wraps approximately 147 bp of DNA. Post-translationally, phosphorylated to form H2AS128ph (gamma-H2A) in response to DNA double-strand breaks (DSBs) generated by exogenous genotoxic agents and by stalled replication forks. Phosphorylation is dependent on the DNA damage checkpoint kinases mec-1/ATR and tel-1/ATM, spreads on either side of a detected DSB site and may mark the surrounding chromatin for recruitment of proteins required for DNA damage signaling and repair. Gamma-H2A is removed from the DNA prior to the strand invasion-primer extension step of the repair process and subsequently dephosphorylated. Dephosphorylation is necessary for efficient recovery from the DNA damage checkpoint. Acetylated by esa-1 to form H2AK4ac and H2AK7ac.

Its subcellular location is the nucleus. It is found in the chromosome. Functionally, core component of nucleosome which plays a central role in DNA double strand break (DSB) repair. Nucleosomes wrap and compact DNA into chromatin, limiting DNA accessibility to the cellular machineries which require DNA as a template. Histones thereby play a central role in transcription regulation, DNA repair, DNA replication and chromosomal stability. DNA accessibility is regulated via a complex set of post-translational modifications of histones, also called histone code, and nucleosome remodeling. This is Histone H2A (hh2a) from Neurospora crassa (strain ATCC 24698 / 74-OR23-1A / CBS 708.71 / DSM 1257 / FGSC 987).